Here is a 326-residue protein sequence, read N- to C-terminus: Phospho-N-acetylmuramoyl-pentapeptide-transferase (326 aa).

10 consecutive transmembrane segments (helical) span residues Ile2–Phe22, Val51–Ala71, Leu73–Ile93, Ile113–Glu133, Gly143–Ser163, Gly175–Thr195, Met199–Asn219, Ile225–Leu245, Met250–Ile270, and Val305–Leu325.

This sequence belongs to the glycosyltransferase 4 family. MraY subfamily. Requires Mg(2+) as cofactor.

It localises to the cell membrane. The enzyme catalyses UDP-N-acetyl-alpha-D-muramoyl-L-alanyl-gamma-D-glutamyl-meso-2,6-diaminopimeloyl-D-alanyl-D-alanine + di-trans,octa-cis-undecaprenyl phosphate = di-trans,octa-cis-undecaprenyl diphospho-N-acetyl-alpha-D-muramoyl-L-alanyl-D-glutamyl-meso-2,6-diaminopimeloyl-D-alanyl-D-alanine + UMP. It functions in the pathway cell wall biogenesis; peptidoglycan biosynthesis. Its function is as follows. Catalyzes the initial step of the lipid cycle reactions in the biosynthesis of the cell wall peptidoglycan: transfers peptidoglycan precursor phospho-MurNAc-pentapeptide from UDP-MurNAc-pentapeptide onto the lipid carrier undecaprenyl phosphate, yielding undecaprenyl-pyrophosphoryl-MurNAc-pentapeptide, known as lipid I. This Wolbachia pipientis wMel protein is Phospho-N-acetylmuramoyl-pentapeptide-transferase.